The sequence spans 268 residues: Tryptophan synthase alpha chain (268 aa).

Catalysis depends on proton acceptor residues Glu49 and Asp60.

It belongs to the TrpA family. Tetramer of two alpha and two beta chains.

The catalysed reaction is (1S,2R)-1-C-(indol-3-yl)glycerol 3-phosphate + L-serine = D-glyceraldehyde 3-phosphate + L-tryptophan + H2O. It functions in the pathway amino-acid biosynthesis; L-tryptophan biosynthesis; L-tryptophan from chorismate: step 5/5. In terms of biological role, the alpha subunit is responsible for the aldol cleavage of indoleglycerol phosphate to indole and glyceraldehyde 3-phosphate. This is Tryptophan synthase alpha chain from Escherichia coli O1:K1 / APEC.